Here is a 254-residue protein sequence, read N- to C-terminus: Probable transcriptional regulatory protein MAE_13580 (254 aa).

It belongs to the TACO1 family.

It is found in the cytoplasm. The sequence is that of Probable transcriptional regulatory protein MAE_13580 from Microcystis aeruginosa (strain NIES-843 / IAM M-2473).